The following is a 348-amino-acid chain: Eukaryotic translation initiation factor 3 subunit H (348 aa).

The region spanning 35-169 (VQIDGLVVLK…LKAYRLTPKL (135 aa)) is the MPN domain. Low complexity predominate over residues 267 to 285 (QQQKHQYQQRRQQENIQRQ). The tract at residues 267–311 (QQQKHQYQQRRQQENIQRQSRGEPPLPEEDINKLFKPPQPPPRME) is disordered.

Belongs to the eIF-3 subunit H family. In terms of assembly, component of the eukaryotic translation initiation factor 3 (eIF-3) complex, which is composed of 13 subunits: EIF3A, EIF3B, EIF3C, EIF3D, EIF3E, EIF3F, EIF3G, EIF3H, EIF3I, EIF3J, EIF3K, EIF3L and EIF3M.

It is found in the cytoplasm. Component of the eukaryotic translation initiation factor 3 (eIF-3) complex, which is involved in protein synthesis of a specialized repertoire of mRNAs and, together with other initiation factors, stimulates binding of mRNA and methionyl-tRNAi to the 40S ribosome. The eIF-3 complex specifically targets and initiates translation of a subset of mRNAs involved in cell proliferation. This Taeniopygia guttata (Zebra finch) protein is Eukaryotic translation initiation factor 3 subunit H.